Consider the following 253-residue polypeptide: Adapter protein MecA (253 aa).

It belongs to the MecA family. As to quaternary structure, homodimer.

Functionally, enables the recognition and targeting of unfolded and aggregated proteins to the ClpC protease or to other proteins involved in proteolysis. The sequence is that of Adapter protein MecA from Streptococcus pyogenes serotype M6 (strain ATCC BAA-946 / MGAS10394).